The sequence spans 780 residues: Gelsolin (780 aa).

Methionine 1 carries the post-translational modification N-acetylmethionine; alternate. A signal peptide spans 1–25 (MAPYRSSLLCALLLLALCALSPSHA). Positions 51–174 (VVEHPEFLKA…YKKGGVASGF (124 aa)) are actin-severing. A Gelsolin-like 1 repeat occupies 74–155 (FDLVPVPPNL…EVQGFESSTF (82 aa)). Tyrosine 84 is modified (phosphotyrosine). Ca(2+) contacts are provided by glycine 90, aspartate 91, glutamate 122, aspartate 134, glycine 139, and alanine 141. Residues 121–124 (DESG) are actin-actin interfilament contact point. Residue 160 to 167 (KSGLKYKK) coordinates a 1,2-diacyl-sn-glycero-3-phospho-(1D-myo-inositol-4,5-bisphosphate). Residue valine 170 participates in Ca(2+) binding. Position 186–194 (186–194 (RLFQVKGRR)) interacts with a 1,2-diacyl-sn-glycero-3-phospho-(1D-myo-inositol-4,5-bisphosphate). The Gelsolin-like 2 repeat unit spans residues 196-268 (VRATEVPVSW…SEEGGEPEAM (73 aa)). Ca(2+) contacts are provided by glycine 211 and aspartate 212. Cysteine 213 and cysteine 226 are disulfide-bonded. Glutamate 234 serves as a coordination point for Ca(2+). A disordered region spans residues 244-269 (GIRDNERSGRAQVHVSEEGGEPEAML). Residues aspartate 284, glutamate 327, aspartate 328, and glutamate 352 each contribute to the Ca(2+) site. The Gelsolin-like 3 repeat unit spans residues 315–387 (DENPFAQGAL…LPEGGETPLF (73 aa)). 2 positions are modified to phosphotyrosine: tyrosine 407 and tyrosine 463. An actin-binding, Ca-sensitive region spans residues 432 to 780 (AAQHGMDDDG…LDRALAELAA (349 aa)). The stretch at 453–534 (SNKVPVDPAT…VQGKEPAHLM (82 aa)) is one Gelsolin-like 4 repeat. Residues glycine 469, aspartate 470, glutamate 500, aspartate 512, glycine 517, proline 519, and threonine 549 each contribute to the Ca(2+) site. Residues 575–640 (RAVEVMPKSG…EEGSEPDAFW (66 aa)) form a Gelsolin-like 5 repeat. An N6-acetyllysine modification is found at lysine 582. The Ca(2+) site is built by asparagine 589 and aspartate 590. Tyrosine 601 is modified (phosphotyrosine). Ca(2+) is bound at residue glutamate 612. The residue at position 649 (tyrosine 649) is a Phosphotyrosine. One copy of the Gelsolin-like 6 repeat lies at 679–754 (IEEVPGELMQ…VRQGFEPPSF (76 aa)). Residues aspartate 694, aspartate 695, and glutamate 717 each coordinate Ca(2+). Residue threonine 740 is modified to Phosphothreonine.

The protein belongs to the villin/gelsolin family. In terms of assembly, binds to actin and to fibronectin. Identified in a complex composed of ACTA1, COBL, GSN and TMSB4X. Interacts with the inactive form of EIF2AK2/PKR. Interacts with FLII. Phosphorylated on tyrosine residues in vitro.

The protein resides in the cytoplasm. Its subcellular location is the cytoskeleton. It localises to the secreted. In terms of biological role, calcium-regulated, actin-modulating protein that binds to the plus (or barbed) ends of actin monomers or filaments, preventing monomer exchange (end-blocking or capping). It can promote the assembly of monomers into filaments (nucleation) as well as sever filaments already formed. Plays a role in ciliogenesis. The protein is Gelsolin (Gsn) of Mus musculus (Mouse).